A 407-amino-acid polypeptide reads, in one-letter code: GTPase Obg (407 aa).

The Obg domain occupies 1 to 159 (MKFVDEVSIR…RDLKLEMKVL (159 aa)). The interval 128-148 (TRFKSSTNRAPRQTTPGKPGE) is disordered. Positions 129 to 143 (RFKSSTNRAPRQTTP) are enriched in polar residues. The OBG-type G domain occupies 160–333 (ADVGLLGLPN…LTRDIMRYLE (174 aa)). GTP-binding positions include 166 to 173 (GLPNAGKS), 191 to 195 (FTTLV), 213 to 216 (DIPG), 283 to 286 (NKCD), and 314 to 316 (SAI). Mg(2+) is bound by residues Ser173 and Thr193. The segment at 376-407 (SGVKSVHDIGDDDWDEEDVDDEDGPEIIYVRD) is disordered. Over residues 385–400 (GDDDWDEEDVDDEDGP) the composition is skewed to acidic residues.

This sequence belongs to the TRAFAC class OBG-HflX-like GTPase superfamily. OBG GTPase family. As to quaternary structure, monomer. It depends on Mg(2+) as a cofactor.

Its subcellular location is the cytoplasm. In terms of biological role, an essential GTPase which binds GTP, GDP and possibly (p)ppGpp with moderate affinity, with high nucleotide exchange rates and a fairly low GTP hydrolysis rate. Plays a role in control of the cell cycle, stress response, ribosome biogenesis and in those bacteria that undergo differentiation, in morphogenesis control. The chain is GTPase Obg from Pseudomonas fluorescens (strain Pf0-1).